A 363-amino-acid polypeptide reads, in one-letter code: Phosphoserine aminotransferase (363 aa).

R42 is a binding site for L-glutamate. Residues G76–R77, W102, T156, D175, and Q198 each bind pyridoxal 5'-phosphate. K199 is modified (N6-(pyridoxal phosphate)lysine). N240–T241 is a binding site for pyridoxal 5'-phosphate.

The protein belongs to the class-V pyridoxal-phosphate-dependent aminotransferase family. SerC subfamily. As to quaternary structure, homodimer. Pyridoxal 5'-phosphate is required as a cofactor.

It localises to the cytoplasm. The catalysed reaction is O-phospho-L-serine + 2-oxoglutarate = 3-phosphooxypyruvate + L-glutamate. It catalyses the reaction 4-(phosphooxy)-L-threonine + 2-oxoglutarate = (R)-3-hydroxy-2-oxo-4-phosphooxybutanoate + L-glutamate. It functions in the pathway amino-acid biosynthesis; L-serine biosynthesis; L-serine from 3-phospho-D-glycerate: step 2/3. Its pathway is cofactor biosynthesis; pyridoxine 5'-phosphate biosynthesis; pyridoxine 5'-phosphate from D-erythrose 4-phosphate: step 3/5. In terms of biological role, catalyzes the reversible conversion of 3-phosphohydroxypyruvate to phosphoserine and of 3-hydroxy-2-oxo-4-phosphonooxybutanoate to phosphohydroxythreonine. This Shewanella baltica (strain OS223) protein is Phosphoserine aminotransferase.